A 1091-amino-acid chain; its full sequence is ATP-dependent helicase/deoxyribonuclease subunit B (1091 aa).

It belongs to the helicase family. AddB/RexB type 2 subfamily. As to quaternary structure, heterodimer of AddA and RexB. The cofactor is Mg(2+).

Its function is as follows. The heterodimer acts as both an ATP-dependent DNA helicase and an ATP-dependent, dual-direction single-stranded exonuclease. Recognizes the chi site generating a DNA molecule suitable for the initiation of homologous recombination. This subunit has 5' -&gt; 3' nuclease activity but not helicase activity. The chain is ATP-dependent helicase/deoxyribonuclease subunit B from Streptococcus pneumoniae (strain CGSP14).